A 65-amino-acid chain; its full sequence is Large ribosomal subunit protein bL35 (65 aa).

The protein belongs to the bacterial ribosomal protein bL35 family.

In Sorangium cellulosum (strain So ce56) (Polyangium cellulosum (strain So ce56)), this protein is Large ribosomal subunit protein bL35.